The primary structure comprises 338 residues: Glycerol-3-phosphate dehydrogenase [NAD(P)+] (338 aa).

Ser-13, Trp-14, and Lys-108 together coordinate NADPH. Sn-glycerol 3-phosphate contacts are provided by Lys-108, Gly-139, and Ser-141. Ala-143 lines the NADPH pocket. Sn-glycerol 3-phosphate-binding residues include Lys-194, Asp-247, Ser-257, Arg-258, and Asn-259. Lys-194 functions as the Proton acceptor in the catalytic mechanism. An NADPH-binding site is contributed by Arg-258. Residues Val-282 and Glu-284 each contribute to the NADPH site.

Belongs to the NAD-dependent glycerol-3-phosphate dehydrogenase family.

It is found in the cytoplasm. It carries out the reaction sn-glycerol 3-phosphate + NAD(+) = dihydroxyacetone phosphate + NADH + H(+). The enzyme catalyses sn-glycerol 3-phosphate + NADP(+) = dihydroxyacetone phosphate + NADPH + H(+). It participates in membrane lipid metabolism; glycerophospholipid metabolism. Catalyzes the reduction of the glycolytic intermediate dihydroxyacetone phosphate (DHAP) to sn-glycerol 3-phosphate (G3P), the key precursor for phospholipid synthesis. This Listeria innocua serovar 6a (strain ATCC BAA-680 / CLIP 11262) protein is Glycerol-3-phosphate dehydrogenase [NAD(P)+].